A 61-amino-acid polypeptide reads, in one-letter code: Large ribosomal subunit protein uL30 (61 aa).

Belongs to the universal ribosomal protein uL30 family. As to quaternary structure, part of the 50S ribosomal subunit.

The chain is Large ribosomal subunit protein uL30 from Rubrobacter xylanophilus (strain DSM 9941 / JCM 11954 / NBRC 16129 / PRD-1).